The primary structure comprises 216 residues: Somatotropin (216 aa).

The signal sequence occupies residues 1–26; that stretch reads MAADPQSSVLLAFALLCLPWPQEVGA. Zn(2+) is bound at residue H45. A disulfide bridge connects residues C78 and C189. Phosphoserine is present on S131. E198 is a Zn(2+) binding site. A disulfide bridge links C206 with C214.

This sequence belongs to the somatotropin/prolactin family.

It localises to the secreted. Functionally, plays an important role in growth control. Its major role in stimulating body growth is to stimulate the liver and other tissues to secrete IGF1. It stimulates both the differentiation and proliferation of myoblasts. It also stimulates amino acid uptake and protein synthesis in muscle and other tissues. In Ailuropoda melanoleuca (Giant panda), this protein is Somatotropin (GH1).